The primary structure comprises 35 residues: Cytochrome c-550 (35 aa).

Residues cysteine 17, cysteine 20, and histidine 21 each coordinate heme c.

Post-translationally, binds 1 heme c group covalently per subunit.

Monoheme cytochrome which functions as an electron carrier in the reduction of nitrite by membrane vesicles. This Virgibacillus halodenitrificans (Bacillus halodenitrificans) protein is Cytochrome c-550.